Reading from the N-terminus, the 297-residue chain is 4-hydroxy-tetrahydrodipicolinate synthase (297 aa).

Thr46 is a pyruvate binding site. Residue Tyr134 is the Proton donor/acceptor of the active site. Lys162 (schiff-base intermediate with substrate) is an active-site residue. Ile204 contacts pyruvate.

This sequence belongs to the DapA family. Homotetramer; dimer of dimers.

The protein resides in the cytoplasm. The enzyme catalyses L-aspartate 4-semialdehyde + pyruvate = (2S,4S)-4-hydroxy-2,3,4,5-tetrahydrodipicolinate + H2O + H(+). The protein operates within amino-acid biosynthesis; L-lysine biosynthesis via DAP pathway; (S)-tetrahydrodipicolinate from L-aspartate: step 3/4. Its function is as follows. Catalyzes the condensation of (S)-aspartate-beta-semialdehyde [(S)-ASA] and pyruvate to 4-hydroxy-tetrahydrodipicolinate (HTPA). The polypeptide is 4-hydroxy-tetrahydrodipicolinate synthase (Stenotrophomonas maltophilia (strain K279a)).